A 335-amino-acid chain; its full sequence is Anthranilate phosphoribosyltransferase (335 aa).

Residues Gly79, 82–83 (GD), Ser87, 89–92 (NIST), 107–115 (KHGNRSITS), and Ser119 each bind 5-phospho-alpha-D-ribose 1-diphosphate. Residue Gly79 participates in anthranilate binding. Ser91 serves as a coordination point for Mg(2+). Asn110 is a binding site for anthranilate. Position 165 (Arg165) interacts with anthranilate. Asp224 and Glu225 together coordinate Mg(2+).

It belongs to the anthranilate phosphoribosyltransferase family. In terms of assembly, homodimer. Requires Mg(2+) as cofactor.

It catalyses the reaction N-(5-phospho-beta-D-ribosyl)anthranilate + diphosphate = 5-phospho-alpha-D-ribose 1-diphosphate + anthranilate. It functions in the pathway amino-acid biosynthesis; L-tryptophan biosynthesis; L-tryptophan from chorismate: step 2/5. Its function is as follows. Catalyzes the transfer of the phosphoribosyl group of 5-phosphorylribose-1-pyrophosphate (PRPP) to anthranilate to yield N-(5'-phosphoribosyl)-anthranilate (PRA). This is Anthranilate phosphoribosyltransferase from Lactococcus lactis subsp. cremoris (strain SK11).